The sequence spans 518 residues: Mitochondrial 2-methylisocitrate lyase (518 aa).

The protein belongs to the isocitrate lyase/PEP mutase superfamily. Isocitrate lyase family.

Its subcellular location is the mitochondrion matrix. It localises to the cytoplasm. The enzyme catalyses (2S,3R)-3-hydroxybutane-1,2,3-tricarboxylate = pyruvate + succinate. It participates in organic acid metabolism; propanoate degradation. In terms of biological role, catalyzes the formation of pyruvate and succinate from 2-methylisocitrate during the metabolism of endogenous propionyl-CoA. Does not act on isocitrate. The chain is Mitochondrial 2-methylisocitrate lyase (icl2) from Schizosaccharomyces pombe (strain 972 / ATCC 24843) (Fission yeast).